The sequence spans 344 residues: 4-hydroxy-3-methylbut-2-en-1-yl diphosphate synthase (flavodoxin) (344 aa).

Cys253, Cys256, Cys288, and Glu295 together coordinate [4Fe-4S] cluster.

The protein belongs to the IspG family. It depends on [4Fe-4S] cluster as a cofactor.

The enzyme catalyses (2E)-4-hydroxy-3-methylbut-2-enyl diphosphate + oxidized [flavodoxin] + H2O + 2 H(+) = 2-C-methyl-D-erythritol 2,4-cyclic diphosphate + reduced [flavodoxin]. The protein operates within isoprenoid biosynthesis; isopentenyl diphosphate biosynthesis via DXP pathway; isopentenyl diphosphate from 1-deoxy-D-xylulose 5-phosphate: step 5/6. In terms of biological role, converts 2C-methyl-D-erythritol 2,4-cyclodiphosphate (ME-2,4cPP) into 1-hydroxy-2-methyl-2-(E)-butenyl 4-diphosphate. The polypeptide is 4-hydroxy-3-methylbut-2-en-1-yl diphosphate synthase (flavodoxin) (Thermotoga petrophila (strain ATCC BAA-488 / DSM 13995 / JCM 10881 / RKU-1)).